The following is a 400-amino-acid chain: Enoyl-[acyl-carrier-protein] reductase [NADH] (400 aa).

Residues 48-53 (GSSSGY), 74-75 (FE), 111-112 (DA), and 139-140 (LA) each bind NAD(+). Substrate is bound at residue Y225. The Proton donor role is filled by Y235. NAD(+)-binding positions include K244 and 273–275 (VVT).

It belongs to the TER reductase family. In terms of assembly, monomer.

It catalyses the reaction a 2,3-saturated acyl-[ACP] + NAD(+) = a (2E)-enoyl-[ACP] + NADH + H(+). It participates in lipid metabolism; fatty acid biosynthesis. In terms of biological role, involved in the final reduction of the elongation cycle of fatty acid synthesis (FAS II). Catalyzes the reduction of a carbon-carbon double bond in an enoyl moiety that is covalently linked to an acyl carrier protein (ACP). The protein is Enoyl-[acyl-carrier-protein] reductase [NADH] of Shewanella frigidimarina (strain NCIMB 400).